Reading from the N-terminus, the 302-residue chain is 4-diphosphocytidyl-2-C-methyl-D-erythritol kinase (302 aa).

Residue Lys-11 is part of the active site. Residue 93–103 (PVASGLAGGST) coordinates ATP. Asp-135 is a catalytic residue.

The protein belongs to the GHMP kinase family. IspE subfamily.

It catalyses the reaction 4-CDP-2-C-methyl-D-erythritol + ATP = 4-CDP-2-C-methyl-D-erythritol 2-phosphate + ADP + H(+). It functions in the pathway isoprenoid biosynthesis; isopentenyl diphosphate biosynthesis via DXP pathway; isopentenyl diphosphate from 1-deoxy-D-xylulose 5-phosphate: step 3/6. Its function is as follows. Catalyzes the phosphorylation of the position 2 hydroxy group of 4-diphosphocytidyl-2C-methyl-D-erythritol. The sequence is that of 4-diphosphocytidyl-2-C-methyl-D-erythritol kinase from Gloeobacter violaceus (strain ATCC 29082 / PCC 7421).